The primary structure comprises 285 residues: Aspartate/glutamate leucyltransferase (285 aa).

It belongs to the R-transferase family. Bpt subfamily.

The protein localises to the cytoplasm. It carries out the reaction N-terminal L-glutamyl-[protein] + L-leucyl-tRNA(Leu) = N-terminal L-leucyl-L-glutamyl-[protein] + tRNA(Leu) + H(+). The enzyme catalyses N-terminal L-aspartyl-[protein] + L-leucyl-tRNA(Leu) = N-terminal L-leucyl-L-aspartyl-[protein] + tRNA(Leu) + H(+). Functions in the N-end rule pathway of protein degradation where it conjugates Leu from its aminoacyl-tRNA to the N-termini of proteins containing an N-terminal aspartate or glutamate. This Dinoroseobacter shibae (strain DSM 16493 / NCIMB 14021 / DFL 12) protein is Aspartate/glutamate leucyltransferase.